A 296-amino-acid chain; its full sequence is Immediate early response gene 5-like protein (296 aa).

The protein belongs to the IER family.

The polypeptide is Immediate early response gene 5-like protein (ier5l) (Xenopus tropicalis (Western clawed frog)).